The primary structure comprises 158 residues: Endoribonuclease YbeY (158 aa).

Residues histidine 124, histidine 128, and histidine 134 each contribute to the Zn(2+) site.

Belongs to the endoribonuclease YbeY family. Zn(2+) is required as a cofactor.

It is found in the cytoplasm. Single strand-specific metallo-endoribonuclease involved in late-stage 70S ribosome quality control and in maturation of the 3' terminus of the 16S rRNA. This Caldicellulosiruptor saccharolyticus (strain ATCC 43494 / DSM 8903 / Tp8T 6331) protein is Endoribonuclease YbeY.